The chain runs to 65 residues: Large ribosomal subunit protein bL35 (65 aa).

A compositionally biased stretch (basic residues) spans 1–15 (MPKLKTRKAAAKRFR). The tract at residues 1–28 (MPKLKTRKAAAKRFRQTGTGKFTRRKAN) is disordered.

It belongs to the bacterial ribosomal protein bL35 family.

This is Large ribosomal subunit protein bL35 from Cyanothece sp. (strain PCC 7425 / ATCC 29141).